The chain runs to 281 residues: Type VI secretion system accessory component TagJ (281 aa).

In terms of assembly, interacts with TssB1 (via N-terminus). Interacts with ClpV1.

Its function is as follows. Component of the H1 type VI (H1-T6SS) secretion system that plays a role in the release of toxins targeting both eukaryotic and prokaryotic species. Forms a stable complex with TssB1. This complex, although not crucial for the H1-T6SS function, may fine-tune the assembly of the system. Plays a role in the interaction between ClpV1 and the TssC1/TssB1 sheath. The chain is Type VI secretion system accessory component TagJ from Pseudomonas aeruginosa (strain ATCC 15692 / DSM 22644 / CIP 104116 / JCM 14847 / LMG 12228 / 1C / PRS 101 / PAO1).